The following is a 170-amino-acid chain: Lipoprotein signal peptidase (170 aa).

Transmembrane regions (helical) follow at residues 12-32 (WYWV…WVLS), 67-87 (WQRW…SVWL), and 94-113 (MWRL…GNLI). Catalysis depends on residues D123 and D141. Residues 139-159 (IADSAICVGAGLIILDSFVAG) form a helical membrane-spanning segment.

This sequence belongs to the peptidase A8 family.

It is found in the cell inner membrane. The catalysed reaction is Release of signal peptides from bacterial membrane prolipoproteins. Hydrolyzes -Xaa-Yaa-Zaa-|-(S,diacylglyceryl)Cys-, in which Xaa is hydrophobic (preferably Leu), and Yaa (Ala or Ser) and Zaa (Gly or Ala) have small, neutral side chains.. The protein operates within protein modification; lipoprotein biosynthesis (signal peptide cleavage). Its function is as follows. This protein specifically catalyzes the removal of signal peptides from prolipoproteins. The polypeptide is Lipoprotein signal peptidase (Shewanella pealeana (strain ATCC 700345 / ANG-SQ1)).